The following is a 1014-amino-acid chain: Isoleucine--tRNA ligase (1014 aa).

A 'HIGH' region motif is present at residues 48–58 (PTANGRPGIHH). The 'KMSKS' region signature appears at 628-632 (KMSKS). Lys-631 contacts ATP.

Belongs to the class-I aminoacyl-tRNA synthetase family. IleS type 2 subfamily. Monomer. It depends on Zn(2+) as a cofactor.

It localises to the cytoplasm. It carries out the reaction tRNA(Ile) + L-isoleucine + ATP = L-isoleucyl-tRNA(Ile) + AMP + diphosphate. Functionally, catalyzes the attachment of isoleucine to tRNA(Ile). As IleRS can inadvertently accommodate and process structurally similar amino acids such as valine, to avoid such errors it has two additional distinct tRNA(Ile)-dependent editing activities. One activity is designated as 'pretransfer' editing and involves the hydrolysis of activated Val-AMP. The other activity is designated 'posttransfer' editing and involves deacylation of mischarged Val-tRNA(Ile). This Dehalococcoides mccartyi (strain CBDB1) protein is Isoleucine--tRNA ligase.